The chain runs to 172 residues: uncharacterized protein (172 aa).

The Ferritin-like diiron domain occupies 1–148; it reads MANSQKVIDV…TIHDFFENGN (148 aa).

This is an uncharacterized protein from Ureaplasma urealyticum (Ureaplasma urealyticum biotype 2).